We begin with the raw amino-acid sequence, 167 residues long: NAD(P)H-quinone oxidoreductase subunit I, chloroplastic (167 aa).

4Fe-4S ferredoxin-type domains are found at residues 55 to 84 (GRIHFEFDKCIACEVCVRVCPIDLPVVDWK) and 95 to 124 (LNYSIDFGICIFCGNCVEYCPTNCLSMTEE). Positions 64, 67, 70, 74, 104, 107, 110, and 114 each coordinate [4Fe-4S] cluster.

Belongs to the complex I 23 kDa subunit family. NDH is composed of at least 16 different subunits, 5 of which are encoded in the nucleus. It depends on [4Fe-4S] cluster as a cofactor.

The protein localises to the plastid. It localises to the chloroplast thylakoid membrane. The enzyme catalyses a plastoquinone + NADH + (n+1) H(+)(in) = a plastoquinol + NAD(+) + n H(+)(out). The catalysed reaction is a plastoquinone + NADPH + (n+1) H(+)(in) = a plastoquinol + NADP(+) + n H(+)(out). NDH shuttles electrons from NAD(P)H:plastoquinone, via FMN and iron-sulfur (Fe-S) centers, to quinones in the photosynthetic chain and possibly in a chloroplast respiratory chain. The immediate electron acceptor for the enzyme in this species is believed to be plastoquinone. Couples the redox reaction to proton translocation, and thus conserves the redox energy in a proton gradient. In Aethionema cordifolium (Lebanon stonecress), this protein is NAD(P)H-quinone oxidoreductase subunit I, chloroplastic.